We begin with the raw amino-acid sequence, 566 residues long: Medium-chain fatty-acid--CoA ligase (566 aa).

231–242 serves as a coordination point for ATP; it reads ILASERAYCARL.

The protein belongs to the ATP-dependent AMP-binding enzyme family. In terms of assembly, homodimer. Requires Mg(2+) as cofactor.

The protein localises to the cell membrane. It catalyses the reaction hexanoate + ATP + CoA = hexanoyl-CoA + AMP + diphosphate. The enzyme catalyses octanoate + ATP + CoA = octanoyl-CoA + AMP + diphosphate. The catalysed reaction is dodecanoate + ATP + CoA = dodecanoyl-CoA + AMP + diphosphate. It participates in lipid metabolism; fatty acid beta-oxidation. Functionally, catalyzes the esterification, concomitant with transport, of exogenous fatty acids into metabolically active CoA thioesters for subsequent degradation or incorporation into phospholipids. Is maximally active on C6:0, C8:0 and C12:0 fatty acids, while has a low activity on C14-C18 chain length fatty acids. Is involved in the anaerobic beta-oxidative degradation of fatty acids, which allows anaerobic growth of E.coli on fatty acids as a sole carbon and energy source in the presence of nitrate or fumarate as a terminal electron acceptor. Can functionally replace FadD under anaerobic conditions. The chain is Medium-chain fatty-acid--CoA ligase from Escherichia coli (strain K12).